The primary structure comprises 178 residues: Interleukin-1 receptor antagonist protein (178 aa).

The first 26 residues, 1–26 (MEICRGPYSHLISLLLILLFRSESAG), serve as a signal peptide directing secretion. Cys-92 and Cys-142 are oxidised to a cystine. Asn-110 carries an N-linked (GlcNAc...) asparagine glycan.

This sequence belongs to the IL-1 family.

Its subcellular location is the secreted. In terms of biological role, anti-inflammatory antagonist of interleukin-1 family of proinflammatory cytokines such as interleukin-1beta/IL1B and interleukin-1alpha/IL1A. Protects from immune dysregulation and uncontrolled systemic inflammation triggered by IL1 for a range of innate stimulatory agents such as pathogens. The chain is Interleukin-1 receptor antagonist protein (Il1rn) from Rattus norvegicus (Rat).